Consider the following 361-residue polypeptide: Free fatty acid receptor 4 (361 aa).

Residues 1–45 (MSPECARAAGDAPLRSLEQANRTRFPFFSDVKGDHRLVLAAVETT) are Extracellular-facing. Asn21 carries an N-linked (GlcNAc...) asparagine glycan. A helical membrane pass occupies residues 46–66 (VLVLIFAVSLLGNVCALVLVA). Residues 67 to 77 (RRRRRGATACL) lie on the Cytoplasmic side of the membrane. Residues 78-98 (VLNLFCADLLFISAIPLVLAV) form a helical membrane-spanning segment. Residues 99-112 (RWTEAWLLGPVACH) lie on the Extracellular side of the membrane. A disulfide bond links Cys111 and Cys194. The helical transmembrane segment at 113-133 (LLFYVMTLSGSVTILTLAAVS) threads the bilayer. Topologically, residues 134-156 (LERMVCIVHLQRGVRGPGRRARA) are cytoplasmic. A helical transmembrane segment spans residues 157–177 (VLLALIWGYSAVAALPLCVFF). Residues 178-204 (RVVPQRLPGADQEISICTLIWPTIPGE) are Extracellular-facing. A helical membrane pass occupies residues 205–225 (ISWDVSFVTLNFLVPGLVIVI). Residues 226–268 (SYSKILQITKASRKRLTVSLAYSESHQIRVSQQDFRLFRTLFL) lie on the Cytoplasmic side of the membrane. Residues 269–289 (LMVSFFIMWSPIIITILLILI) traverse the membrane as a helical segment. Residues 290-295 (QNFKQD) are Extracellular-facing. The chain crosses the membrane as a helical span at residues 296–316 (LVIWPSLFFWVVAFTFANSAL). Residues 317–361 (NPILYNMTLCRNEWKKIFCCFWFPEKGAILTDTSVKRNDLSIISG) lie on the Cytoplasmic side of the membrane. Thr347 and Thr349 each carry phosphothreonine. 3 positions are modified to phosphoserine: Ser350, Ser357, and Ser360.

This sequence belongs to the G-protein coupled receptor 1 family. As to quaternary structure, interacts (via C-terminus) with ARRB2 following LCFAs stimulation. Post-translationally, phosphorylated at two clusters of Ser and Thr residues located in the intracellular C-terminus, a prerequisite for FFAR4 internalization via an ARRB2-dependent pathway. The predominant isoform in human tissues. Expressed in adipose tissue, pancreatic islets, lung and brain. Expressed in alpha cells of pancreatic islets. Expressed in primary cilia of perivascular preadipocytes of white adipose tissue (at protein level). As to expression, abundant expression in the intestinal tract. Expressed in colonic intraepithelial neuroendocrine cells.

The protein resides in the cell membrane. The protein localises to the endosome membrane. It localises to the lysosome membrane. Its subcellular location is the cell projection. It is found in the cilium membrane. Its function is as follows. G-protein-coupled receptor for long-chain fatty acids (LCFAs) with a major role in adipogenesis, energy metabolism and inflammation. Signals via G-protein and beta-arrestin pathways. LCFAs sensing initiates activation of phosphoinositidase C-linked G proteins GNAQ and GNA11 (G(q)/G(11)), inducing a variety of cellular responses via second messenger pathways such as intracellular calcium mobilization, modulation of cyclic adenosine monophosphate (cAMP) production, and mitogen-activated protein kinases (MAPKs). After LCFAs binding, associates with beta-arrestin ARRB2 that acts as an adapter protein coupling the receptor to specific downstream signaling pathways, as well as mediating receptor endocytosis. In response to dietary fats, plays an important role in the regulation of adipocyte proliferation and differentiation. Acts as a receptor for omega-3 polyunsaturated fatty acids (PUFAs) at primary cilium of perivascular preadipocytes, initiating an adipogenic program via cAMP and CTCF-dependent chromatin remodeling that ultimately results in transcriptional activation of adipogenic genes and cell cycle entry. Induces differentiation of brown adipocytes probably via autocrine and endocrine functions of FGF21 hormone. Activates brown adipocytes by initiating intracellular calcium signaling that leads to mitochondrial depolarization and fission, and overall increased mitochondrial respiration. Consequently stimulates fatty acid uptake and oxidation in mitochondria together with UCP1-mediated thermogenic respiration, eventually reducing fat mass. Regulates bi-potential differentiation of bone marrow mesenchymal stem cells toward osteoblasts or adipocytes likely by up-regulating distinct integrins. In response to dietary fats regulates hormone secretion and appetite. Stimulates GIP and GLP1 secretion from enteroendocrine cells as well as GCG secretion in pancreatic alpha cells, thereby playing a role in the regulation of blood glucose levels. Negatively regulates glucose-induced SST secretion in pancreatic delta cells. Mediates LCFAs inhibition of GHRL secretion, an appetite-controlling hormone. In taste buds, contributes to sensing of dietary fatty acids by the gustatory system. During the inflammatory response, promotes anti-inflammatory M2 macrophage differentiation in adipose tissue. Mediates the anti-inflammatory effects of omega-3 PUFAs via inhibition of NLRP3 inflammasome activation. In this pathway, interacts with adapter protein ARRB2 and inhibits the priming step triggered by Toll-like receptors (TLRs) at the level of TAK1 and TAB1. Further inhibits the activation step when ARRB2 directly associates with NLRP3, leading to inhibition of pro-inflammatory cytokine release. Mediates LCFAs anti-apoptotic effects. Receptor for LCFAs decoupled from G-protein signaling. May signal through beta-arrestin pathway. After LCFAs binding, associates with beta-arrestin ARRB2 that may act as an adapter protein coupling the receptor to specific downstream signaling pathways, as well as mediating receptor endocytosis. In Homo sapiens (Human), this protein is Free fatty acid receptor 4.